The chain runs to 389 residues: Galactokinase (389 aa).

E34–D37 is a binding site for substrate. ATP is bound by residues S68 and G125–S131. Positions 131 and 163 each coordinate Mg(2+). The active-site Proton acceptor is the D175. Y225 lines the substrate pocket.

This sequence belongs to the GHMP kinase family. GalK subfamily.

The protein resides in the cytoplasm. The catalysed reaction is alpha-D-galactose + ATP = alpha-D-galactose 1-phosphate + ADP + H(+). It functions in the pathway carbohydrate metabolism; galactose metabolism. Catalyzes the transfer of the gamma-phosphate of ATP to D-galactose to form alpha-D-galactose-1-phosphate (Gal-1-P). In Clostridium acetobutylicum (strain ATCC 824 / DSM 792 / JCM 1419 / IAM 19013 / LMG 5710 / NBRC 13948 / NRRL B-527 / VKM B-1787 / 2291 / W), this protein is Galactokinase.